Reading from the N-terminus, the 273-residue chain is Dermonecrotic toxin LapSicTox-alphaIB1c (273 aa).

His-5 is an active-site residue. 2 residues coordinate Mg(2+): Glu-25 and Asp-27. Catalysis depends on His-41, which acts as the Nucleophile. 2 disulfides stabilise this stretch: Cys-45/Cys-51 and Cys-47/Cys-190. Asp-85 is a Mg(2+) binding site. N-linked (GlcNAc...) asparagine glycosylation occurs at Asn-250.

The protein belongs to the arthropod phospholipase D family. Class II subfamily. Mg(2+) is required as a cofactor. Expressed by the venom gland.

The protein localises to the secreted. The enzyme catalyses an N-(acyl)-sphingosylphosphocholine = an N-(acyl)-sphingosyl-1,3-cyclic phosphate + choline. The catalysed reaction is an N-(acyl)-sphingosylphosphoethanolamine = an N-(acyl)-sphingosyl-1,3-cyclic phosphate + ethanolamine. It carries out the reaction a 1-acyl-sn-glycero-3-phosphocholine = a 1-acyl-sn-glycero-2,3-cyclic phosphate + choline. It catalyses the reaction a 1-acyl-sn-glycero-3-phosphoethanolamine = a 1-acyl-sn-glycero-2,3-cyclic phosphate + ethanolamine. Dermonecrotic toxins cleave the phosphodiester linkage between the phosphate and headgroup of certain phospholipids (sphingolipid and lysolipid substrates), forming an alcohol (often choline) and a cyclic phosphate. This toxin acts on sphingomyelin (SM). It may also act on ceramide phosphoethanolamine (CPE), lysophosphatidylcholine (LPC) and lysophosphatidylethanolamine (LPE), but not on lysophosphatidylserine (LPS), and lysophosphatidylglycerol (LPG). It acts by transphosphatidylation, releasing exclusively cyclic phosphate products as second products. Induces dermonecrosis, hemolysis, increased vascular permeability, edema, inflammatory response, and platelet aggregation. The chain is Dermonecrotic toxin LapSicTox-alphaIB1c from Loxosceles apachea (Apache recluse spider).